Reading from the N-terminus, the 340-residue chain is Entry-fusion complex protein OPG094 (340 aa).

The tract at residues 1 to 20 is disordered; sequence MGGGVSVELPKRDPPPGVPT. G2 carries N-myristoyl glycine; by host lipidation. The Virion surface segment spans residues 2 to 319; sequence GGGVSVELPK…VQHNIKHSFD (318 aa). The chain crosses the membrane as a helical; Signal-anchor for type II membrane protein span at residues 320–340; the sequence is LKLHLISLLSLLVIWILIVAI.

It belongs to the orthopoxvirus OPG086 family. As to quaternary structure, interacts with OPG143. Component of the entry fusion complex (EFC) composed of OPG053, OPG076, OPG086, OPG094, OPG095, OPG099, OPG107, OPG143, OPG104, OPG147 and OPG155. Except for OPG095 and OPG053, each of the EFC proteins is required for assembly or stability of the complex. Unglycosylated because produced in viral factories instead of the classic ER -Golgi route.

It localises to the virion membrane. Its function is as follows. Component of the entry fusion complex (EFC), which consists of 11 proteins. During cell infection, this complex mediates entry of the virion core into the host cytoplasm by a two-step mechanism consisting of lipid mixing of the viral and cellular membranes and subsequent pore formation. This is Entry-fusion complex protein OPG094 (OPG094) from Homo sapiens (Human).